The following is a 220-amino-acid chain: Protein myomaker (220 aa).

A topological domain (extracellular) is located at residue M1. Residues 2–22 traverse the membrane as a helical segment; it reads GAFIAKMLLPTISSLVFVPAA. Over 23–37 the chain is Cytoplasmic; the sequence is SVAAKRGFHMEAMVY. A helical membrane pass occupies residues 38 to 58; it reads FFTMFFTAIYHACDGPGLSIL. Over 59 to 64 the chain is Extracellular; sequence CFMKYD. The helical transmembrane segment at 65 to 85 threads the bilayer; that stretch reads ILEYFSVYGTAISMWVTLLAL. The Cytoplasmic segment spans residues 86 to 93; it reads GDFDEPKR. A helical membrane pass occupies residues 94-110; that stretch reads SSLTMFGVLTAAVRIYQ. Over 111–112 the chain is Extracellular; the sequence is DR. A helical transmembrane segment spans residues 113 to 133; it reads LGYGIYSGPIGTAVFMITVKW. The Cytoplasmic segment spans residues 134 to 153; the sequence is LQKMKEKKGLYPDKSVYTQQ. Residues 154-174 form a helical membrane-spanning segment; that stretch reads VGPGCCFGALALMLRFYFEEW. Position 175 (D175) is a topological domain, extracellular. A helical transmembrane segment spans residues 176–196; it reads YAYVHSFYHVSLAMSFILLLP. The Cytoplasmic portion of the chain corresponds to 197-220; the sequence is KKNRYAGTGRNAAKLNCYTLCCCV.

It belongs to the TMEM8 family.

It is found in the cell membrane. Myoblast-specific protein that mediates myoblast fusion, an essential step for the formation of multi-nucleated muscle fibers. Actively participates in the membrane fusion reaction by mediating the mixing of cell membrane lipids (hemifusion) upstream of mymx. The polypeptide is Protein myomaker (Danio rerio (Zebrafish)).